A 594-amino-acid chain; its full sequence is U3 small nucleolar RNA-associated protein 18 (594 aa).

Disordered stretches follow at residues 48–128 (EQEM…WIDS) and 176–200 (KWVD…SNNV). 3 stretches are compositionally biased toward acidic residues: residues 49–72 (QEMD…DEAQ), 102–128 (TMDV…WIDS), and 180–196 (DESD…EEEG). The interaction with UTP21 stretch occupies residues 101–190 (DTMDVDDEDD…ESDSELDDEE (90 aa)). 2 positions are modified to phosphoserine: S182 and S184. 5 WD repeats span residues 246-285 (PSHS…NHLV), 290-334 (LVGS…LTHS), 463-504 (GTTT…TSST), 513-554 (QLTT…VFSN), and 560-593 (TPLG…KLNH).

Belongs to the WD repeat UTP18 family. Interacts with snoRNA U3. Interacts with MPP10, UTP21 and UTP25. Component of the ribosomal small subunit (SSU) processome composed of at least 40 protein subunits and snoRNA U3.

The protein resides in the nucleus. The protein localises to the nucleolus. In terms of biological role, involved in nucleolar processing of pre-18S ribosomal RNA and ribosome assembly. The protein is U3 small nucleolar RNA-associated protein 18 (UTP18) of Saccharomyces cerevisiae (strain ATCC 204508 / S288c) (Baker's yeast).